A 302-amino-acid chain; its full sequence is Decaprenyl-phosphate phosphoribosyltransferase (302 aa).

Position 28 (lysine 28) interacts with 5-phospho-alpha-D-ribose 1-diphosphate. Transmembrane regions (helical) follow at residues 30 to 50 (VLVL…DYVE) and 55 to 75 (VSMA…VNDV). 5-phospho-alpha-D-ribose 1-diphosphate is bound at residue tyrosine 70. Residues asparagine 73 and aspartate 77 each coordinate Mg(2+). 5-phospho-alpha-D-ribose 1-diphosphate is bound at residue lysine 87. 2 consecutive transmembrane segments (helical) span residues 100-120 (WLAY…AWML) and 122-142 (PNLA…CFGL). 2 residues coordinate 5-phospho-alpha-D-ribose 1-diphosphate: lysine 143 and arginine 160. 2 helical membrane passes run 146 to 166 (AVVE…AGGV) and 170 to 190 (IPLS…MVAG). Lysine 191 serves as a coordination point for trans,octa-cis-decaprenyl phosphate. 3 helical membrane passes run 218–238 (LRFV…LWAF), 244–264 (SGSW…RYAV), and 282–302 (RVLQ…VAFG).

The protein belongs to the UbiA prenyltransferase family. DPPR synthase subfamily. Homotrimer. Mg(2+) serves as cofactor.

It is found in the cell inner membrane. It carries out the reaction trans,octa-cis-decaprenyl phosphate + 5-phospho-alpha-D-ribose 1-diphosphate + H(+) = trans,octa-cis-decaprenylphospho-beta-D-ribofuranose 5-phosphate + diphosphate. It participates in cell wall biogenesis; cell wall polysaccharide biosynthesis. In terms of biological role, involved in the biosynthesis of decaprenylphosphoryl arabinose (DPA) a precursor for arabinan synthesis in mycobacterial cell wall biosynthesis. Catalyzes the transfer of a 5-phosphoribosyl residue from phosphoribose diphosphate (PRPP) to decaprenyl phosphate (DP) to form decaprenylphosphoryl-5-phosphoribose (DPPR). This chain is Decaprenyl-phosphate phosphoribosyltransferase, found in Mycobacterium tuberculosis (strain CDC 1551 / Oshkosh).